The following is a 292-amino-acid chain: Phosphoribosylaminoimidazole-succinocarboxamide synthase (292 aa).

The protein belongs to the SAICAR synthetase family.

The enzyme catalyses 5-amino-1-(5-phospho-D-ribosyl)imidazole-4-carboxylate + L-aspartate + ATP = (2S)-2-[5-amino-1-(5-phospho-beta-D-ribosyl)imidazole-4-carboxamido]succinate + ADP + phosphate + 2 H(+). It functions in the pathway purine metabolism; IMP biosynthesis via de novo pathway; 5-amino-1-(5-phospho-D-ribosyl)imidazole-4-carboxamide from 5-amino-1-(5-phospho-D-ribosyl)imidazole-4-carboxylate: step 1/2. This Thermodesulfovibrio yellowstonii (strain ATCC 51303 / DSM 11347 / YP87) protein is Phosphoribosylaminoimidazole-succinocarboxamide synthase.